A 93-amino-acid chain; its full sequence is Putative pterin-4-alpha-carbinolamine dehydratase (93 aa).

This sequence belongs to the pterin-4-alpha-carbinolamine dehydratase family.

It catalyses the reaction (4aS,6R)-4a-hydroxy-L-erythro-5,6,7,8-tetrahydrobiopterin = (6R)-L-erythro-6,7-dihydrobiopterin + H2O. The polypeptide is Putative pterin-4-alpha-carbinolamine dehydratase (Nostoc sp. (strain PCC 7120 / SAG 25.82 / UTEX 2576)).